A 381-amino-acid polypeptide reads, in one-letter code: Queuine tRNA-ribosyltransferase (381 aa).

Catalysis depends on aspartate 96, which acts as the Proton acceptor. Residues 96–100 (DSGGF), aspartate 150, glutamine 193, and glycine 220 each bind substrate. Residues 251–257 (GVGSPDS) are RNA binding. Aspartate 270 functions as the Nucleophile in the catalytic mechanism. Residues 275–279 (TRIAR) form an RNA binding; important for wobble base 34 recognition region. 4 residues coordinate Zn(2+): cysteine 308, cysteine 310, cysteine 313, and histidine 339.

The protein belongs to the queuine tRNA-ribosyltransferase family. In terms of assembly, homodimer. Within each dimer, one monomer is responsible for RNA recognition and catalysis, while the other monomer binds to the replacement base PreQ1. Zn(2+) is required as a cofactor.

The catalysed reaction is 7-aminomethyl-7-carbaguanine + guanosine(34) in tRNA = 7-aminomethyl-7-carbaguanosine(34) in tRNA + guanine. It participates in tRNA modification; tRNA-queuosine biosynthesis. In terms of biological role, catalyzes the base-exchange of a guanine (G) residue with the queuine precursor 7-aminomethyl-7-deazaguanine (PreQ1) at position 34 (anticodon wobble position) in tRNAs with GU(N) anticodons (tRNA-Asp, -Asn, -His and -Tyr). Catalysis occurs through a double-displacement mechanism. The nucleophile active site attacks the C1' of nucleotide 34 to detach the guanine base from the RNA, forming a covalent enzyme-RNA intermediate. The proton acceptor active site deprotonates the incoming PreQ1, allowing a nucleophilic attack on the C1' of the ribose to form the product. After dissociation, two additional enzymatic reactions on the tRNA convert PreQ1 to queuine (Q), resulting in the hypermodified nucleoside queuosine (7-(((4,5-cis-dihydroxy-2-cyclopenten-1-yl)amino)methyl)-7-deazaguanosine). This is Queuine tRNA-ribosyltransferase from Bacillus licheniformis (strain ATCC 14580 / DSM 13 / JCM 2505 / CCUG 7422 / NBRC 12200 / NCIMB 9375 / NCTC 10341 / NRRL NRS-1264 / Gibson 46).